The primary structure comprises 127 residues: Putative defensin-like protein 180 (127 aa).

Residues 1 to 26 (MERITSLVFFASFLIIFVSGVNQTRA) form the signal peptide. 8 cysteine pairs are disulfide-bonded: C29–C70, C36–C55, C39–C64, C43–C66, C81–C127, C92–C112, C97–C121, and C101–C123.

Belongs to the DEFL family.

The protein resides in the secreted. The chain is Putative defensin-like protein 180 (LCR58) from Arabidopsis thaliana (Mouse-ear cress).